Here is a 425-residue protein sequence, read N- to C-terminus: Serine--tRNA ligase (425 aa).

229-231 contributes to the L-serine binding site; it reads TSE. Residues 259 to 261 and Val-275 contribute to the ATP site; that span reads RKE. Glu-282 contacts L-serine. 349-352 contacts ATP; the sequence is EVTS. Thr-384 contributes to the L-serine binding site.

The protein belongs to the class-II aminoacyl-tRNA synthetase family. Type-1 seryl-tRNA synthetase subfamily. As to quaternary structure, homodimer. The tRNA molecule binds across the dimer.

It localises to the cytoplasm. It carries out the reaction tRNA(Ser) + L-serine + ATP = L-seryl-tRNA(Ser) + AMP + diphosphate + H(+). The enzyme catalyses tRNA(Sec) + L-serine + ATP = L-seryl-tRNA(Sec) + AMP + diphosphate + H(+). It functions in the pathway aminoacyl-tRNA biosynthesis; selenocysteinyl-tRNA(Sec) biosynthesis; L-seryl-tRNA(Sec) from L-serine and tRNA(Sec): step 1/1. Its function is as follows. Catalyzes the attachment of serine to tRNA(Ser). Is also able to aminoacylate tRNA(Sec) with serine, to form the misacylated tRNA L-seryl-tRNA(Sec), which will be further converted into selenocysteinyl-tRNA(Sec). This Borrelia garinii subsp. bavariensis (strain ATCC BAA-2496 / DSM 23469 / PBi) (Borreliella bavariensis) protein is Serine--tRNA ligase.